The chain runs to 248 residues: Tyrosine recombinase XerD-like (248 aa).

Residues 1-72 (MKSYIEPFIA…TANQFLYYLY (72 aa)) enclose the Core-binding (CB) domain. The 164-residue stretch at 85-248 (DTMKVMRTEK…PVTLEKYYKS (164 aa)) folds into the Tyr recombinase domain. Residues Lys-149 and Arg-213 contribute to the active site. The active-site O-(3'-phospho-DNA)-tyrosine intermediate is Tyr-245.

Belongs to the 'phage' integrase family. XerD-like subfamily.

It is found in the cytoplasm. In terms of biological role, putative tyrosine recombinase. Not involved in the cutting and rejoining of the recombining DNA molecules on dif(SL) site. The protein is Tyrosine recombinase XerD-like of Streptococcus pyogenes serotype M4 (strain MGAS10750).